The following is a 237-amino-acid chain: Purine nucleoside phosphorylase DeoD-type (237 aa).

H4 lines the a purine D-ribonucleoside pocket. Residues G20, R24, R43, and 87 to 90 each bind phosphate; that span reads RVGT. Residues 179-181 and 203-204 contribute to the a purine D-ribonucleoside site; these read EME and SD. Catalysis depends on D204, which acts as the Proton donor.

Belongs to the PNP/UDP phosphorylase family. In terms of assembly, homohexamer; trimer of homodimers.

It catalyses the reaction a purine D-ribonucleoside + phosphate = a purine nucleobase + alpha-D-ribose 1-phosphate. The catalysed reaction is a purine 2'-deoxy-D-ribonucleoside + phosphate = a purine nucleobase + 2-deoxy-alpha-D-ribose 1-phosphate. Functionally, catalyzes the reversible phosphorolytic breakdown of the N-glycosidic bond in the beta-(deoxy)ribonucleoside molecules, with the formation of the corresponding free purine bases and pentose-1-phosphate. The chain is Purine nucleoside phosphorylase DeoD-type from Streptococcus pyogenes serotype M12 (strain MGAS2096).